Consider the following 448-residue polypeptide: Probable glucuronoxylan glucuronosyltransferase IRX7 (448 aa).

Topologically, residues 1 to 16 are cytoplasmic; that stretch reads MTTHKHRRTEKNLCFK. The helical; Signal-anchor for type II membrane protein transmembrane segment at 17-37 threads the bilayer; sequence QYYKWILCFILTLYFFASFFV. Residues 38-448 lie on the Lumenal side of the membrane; the sequence is DHDQDHRSST…RSVRRSNSFL (411 aa). Asparagine 157, asparagine 189, asparagine 287, asparagine 397, and asparagine 438 each carry an N-linked (GlcNAc...) asparagine glycan.

The protein belongs to the glycosyltransferase 47 family. Expressed in developing interfascicular fibers and xylem cells in stems and developing secondary xylem in roots.

The protein resides in the golgi apparatus membrane. Its function is as follows. Involved in the synthesis of the hemicellulose glucuronoxylan, a major component of secondary cell walls. Probably involved in the synthesis of the glycosyl sequence at the glucuronoxylan reducing end. This is Probable glucuronoxylan glucuronosyltransferase IRX7 (IRX7) from Arabidopsis thaliana (Mouse-ear cress).